Reading from the N-terminus, the 343-residue chain is Ricin B-like lectin R40G2 (343 aa).

The region spanning 194–340 (TVRVFSAAGE…CEGDNQRWKI (147 aa)) is the Ricin B-type lectin domain.

In terms of biological role, lectin which binds carbohydrates in vitro. Interacts through its lectin domain with glycan structures containing specific motifs. The protein is Ricin B-like lectin R40G2 of Oryza sativa subsp. japonica (Rice).